A 389-amino-acid polypeptide reads, in one-letter code: Leucine aminopeptidase 1 (389 aa).

The N-terminal stretch at 1 to 18 (MKSSVLLSLCTAALVAGA) is a signal peptide. The propeptide occupies 19–89 (AHPLEPQVVL…INANRLIEKS (71 aa)). Asparagine 99, asparagine 156, and asparagine 180 each carry an N-linked (GlcNAc...) asparagine glycan. Histidine 188, aspartate 207, glutamate 246, and aspartate 273 together coordinate Zn(2+). A disulfide bridge connects residues cysteine 322 and cysteine 326. Histidine 355 contacts Zn(2+).

It belongs to the peptidase M28 family. M28E subfamily. Monomer. Requires Zn(2+) as cofactor.

The protein localises to the secreted. Functionally, extracellular aminopeptidase that allows assimilation of proteinaceous substrates. The protein is Leucine aminopeptidase 1 (LAP1) of Phaeosphaeria nodorum (strain SN15 / ATCC MYA-4574 / FGSC 10173) (Glume blotch fungus).